The chain runs to 511 residues: 2-methylbutanal oxime monooxygenase (511 aa).

A run of 2 helical transmembrane segments spans residues 10–30 (PPQW…LLLF) and 304–324 (ILMN…TWAF). Cys451 is a binding site for heme.

This sequence belongs to the cytochrome P450 family. Heme serves as cofactor. Expressed in storage roots, primary roots, petioles and vascular tissues. Expressed in the outer cortex cells, the endodermis and around the xylem, phloem cells and laticifers.

Its subcellular location is the microsome membrane. The enzyme catalyses (1E,2S)-2-methylbutanal oxime + reduced [NADPH--hemoprotein reductase] + O2 = 2-hydroxy-2-methylbutanenitrile + oxidized [NADPH--hemoprotein reductase] + 2 H2O + H(+). It carries out the reaction (E)-2-methylpropanal oxime + reduced [NADPH--hemoprotein reductase] + O2 = 2-hydroxy-2-methylpropanenitrile + oxidized [NADPH--hemoprotein reductase] + 2 H2O + H(+). In terms of biological role, catalyzes the conversion of (E)-2-methylpropanal oxime (valox) to 2-hydroxy-2-methylpropanenitrile (acetone cyanohydrin) and of (E)-2-methylbutanal oxime (ilox) to 2-hydroxy-2-methylbutyronitrile. The reaction takes place in three steps. First, the oxime is isomerized to the (Z)- isomer, next the (Z)-isomer is dehydrated to the corresponding nitrile, followed by a C-hydroxylation of the nitrile. Can use both aliphatic and aromatic oximes as substrates. The protein is 2-methylbutanal oxime monooxygenase (CYP71E7) of Manihot esculenta (Cassava).